Here is a 455-residue protein sequence, read N- to C-terminus: UDP-N-acetylmuramate--L-alanine ligase (455 aa).

109 to 115 lines the ATP pocket; that stretch reads GTHGKTT.

Belongs to the MurCDEF family.

It localises to the cytoplasm. It catalyses the reaction UDP-N-acetyl-alpha-D-muramate + L-alanine + ATP = UDP-N-acetyl-alpha-D-muramoyl-L-alanine + ADP + phosphate + H(+). The protein operates within cell wall biogenesis; peptidoglycan biosynthesis. In terms of biological role, cell wall formation. The chain is UDP-N-acetylmuramate--L-alanine ligase from Caldicellulosiruptor saccharolyticus (strain ATCC 43494 / DSM 8903 / Tp8T 6331).